We begin with the raw amino-acid sequence, 908 residues long: NADH-quinone oxidoreductase subunit G (908 aa).

The 2Fe-2S ferredoxin-type domain maps to A2–E83. 4 residues coordinate [2Fe-2S] cluster: C34, C45, C48, and C67. A 4Fe-4S His(Cys)3-ligated-type domain is found at E83–G122. H99, C103, C106, C112, C151, C154, C157, C201, C228, C231, C235, and C263 together coordinate [4Fe-4S] cluster. One can recognise a 4Fe-4S Mo/W bis-MGD-type domain in the interval M221–D277.

This sequence belongs to the complex I 75 kDa subunit family. Composed of 13 different subunits. Subunits NuoCD, E, F, and G constitute the peripheral sector of the complex. The cofactor is [2Fe-2S] cluster. Requires [4Fe-4S] cluster as cofactor.

It carries out the reaction a quinone + NADH + 5 H(+)(in) = a quinol + NAD(+) + 4 H(+)(out). Functionally, NDH-1 shuttles electrons from NADH, via FMN and iron-sulfur (Fe-S) centers, to quinones in the respiratory chain. The immediate electron acceptor for the enzyme in this species is believed to be ubiquinone. Couples the redox reaction to proton translocation (for every two electrons transferred, four hydrogen ions are translocated across the cytoplasmic membrane), and thus conserves the redox energy in a proton gradient. The sequence is that of NADH-quinone oxidoreductase subunit G (nuoG) from Escherichia coli O157:H7.